The chain runs to 207 residues: Large ribosomal subunit protein uL4 (207 aa).

A disordered region spans residues 49-78 (HAVKNRSAVRGGGKKPWRQKGTGRARQGSI). Basic residues predominate over residues 60–71 (GGKKPWRQKGTG).

It belongs to the universal ribosomal protein uL4 family. As to quaternary structure, part of the 50S ribosomal subunit.

In terms of biological role, one of the primary rRNA binding proteins, this protein initially binds near the 5'-end of the 23S rRNA. It is important during the early stages of 50S assembly. It makes multiple contacts with different domains of the 23S rRNA in the assembled 50S subunit and ribosome. Forms part of the polypeptide exit tunnel. The protein is Large ribosomal subunit protein uL4 of Ligilactobacillus salivarius (strain UCC118) (Lactobacillus salivarius).